Reading from the N-terminus, the 405-residue chain is MASLGVILFFVIASLIHGKPIHSERKAAKIPLEGSNLGYKKPNNIYGSRLSQGMRYPPSMMQLYQTLILGNDTDLSILEYPVLQESDAVLSLIAKSCVVVGNRWTLSFDMSSISSSNELKLAELRIRLPSFERSQDVTVEIYHTKEGQENLFMGSFKTNPSVAMGSSWKIFNLTRMLQYYLHQGEPFTNVEYIEVKNMHERAKPHVIKRGVRAEVEEGLQRNKDNTPASSFPTERVVLVVFTRDKPTASHFGSPSLIHTVESSKYVMSENTVRVTDTRRPRRNQKTKNTIVMNTIPSRSVGKTLCRRVDMIVDFEKIEWGDRIVYPKRFNAYRCEGACPIPLNETFKPTNHAYIKSLVKLYDQEKVECSSCVPVKMSPLSMLLYEDGEVVLKHHEDMIVDECGCN.

Positions 1–18 (MASLGVILFFVIASLIHG) are cleaved as a signal peptide. The propeptide occupies 19-282 (KPIHSERKAA…RVTDTRRPRR (264 aa)). 3 N-linked (GlcNAc...) asparagine glycosylation sites follow: asparagine 71, asparagine 172, and asparagine 343. Intrachain disulfides connect cysteine 305-cysteine 371, cysteine 334-cysteine 402, and cysteine 338-cysteine 404.

The protein belongs to the TGF-beta family. In terms of assembly, homodimer; disulfide-linked. Forms heterodimers with the TGF-beta family member derriere. Interacts with tsku; enhances nodal2 activity. As to expression, first localized to the vegetal region of the blastula. Just prior to gastrulation (stage 10), this expression disappears and instead becomes localized to the dorsal marginal zone, with enrichment in the organizer.

The protein localises to the secreted. Functionally, cooperation and regulatory loops of multiple nodals are essential for mesendoderm patterning in early embryos. Essential for mesoderm formation and axial patterning during embryonic development. Activates the activin-like signaling pathway to induce dorsal and ventral mesoderm in animal cap ectoderm. In addition, also dorsalizes ventral marginal zone (VMZ) tissues during gastrulation. Induces muscle actin. Appears to act as both a short-range and long-range morphogen. The unprocessed protein inhibits bmp- and wnt-signaling. In Xenopus laevis (African clawed frog), this protein is Nodal homolog 2-A (nodal2-a).